We begin with the raw amino-acid sequence, 409 residues long: Elongation factor Tu, chloroplastic (409 aa).

In terms of domain architecture, tr-type G spans 10–214; the sequence is KPHINIGTIG…AVDAYIPTPE (205 aa). Positions 19–26 are G1; sequence GHVDHGKT. 19–26 is a GTP binding site; sequence GHVDHGKT. Thr26 contacts Mg(2+). Positions 60–64 are G2; the sequence is GITIN. The interval 81-84 is G3; sequence DCPG. GTP is bound by residues 81 to 85 and 136 to 139; these read DCPGH and NKQD. A G4 region spans residues 136-139; sequence NKQD. The tract at residues 174 to 176 is G5; the sequence is SRL.

This sequence belongs to the TRAFAC class translation factor GTPase superfamily. Classic translation factor GTPase family. EF-Tu/EF-1A subfamily.

The protein resides in the plastid. Its subcellular location is the chloroplast. The enzyme catalyses GTP + H2O = GDP + phosphate + H(+). Functionally, GTP hydrolase that promotes the GTP-dependent binding of aminoacyl-tRNA to the A-site of ribosomes during protein biosynthesis. This chain is Elongation factor Tu, chloroplastic (tufA), found in Stephanocyclus meneghinianus (Diatom).